We begin with the raw amino-acid sequence, 345 residues long: MMLAIGKRRYVRTRQYPARKVKIVSEATELLQKYPYVFLFDLHGLSSRILHEYRYRLRRYGVIKIIKPTLFKIAFTKVYGGIPAEIAEKVRGEVGFFFTSFNPAEVIKIVAENSVRRAAQPGDKAPFDIVVPAGPTNASPGPIISKFGKLKIPTRVQEGKIWIAKDTVVAKAGQEITPEMAEVLRVVGIEPIFEQLRLLGVIWRGQRFVDISELIIDVNKYKELFETASVYARNLALNIVYPTREVLQAVIPAAHMRAVALAAKLGVVTRETLPALLSRAVAEANALAAVVAAKAPDLGISVSLPQTAAPQQTPQPTEAPKEEAQEEKKEGPSEEEIAGSLASLF.

The disordered stretch occupies residues 303–345 (SLPQTAAPQQTPQPTEAPKEEAQEEKKEGPSEEEIAGSLASLF). Residues 305 to 318 (PQTAAPQQTPQPTE) show a composition bias toward low complexity. A compositionally biased stretch (basic and acidic residues) spans 319-332 (APKEEAQEEKKEGP).

The protein belongs to the universal ribosomal protein uL10 family. As to quaternary structure, part of the 50S ribosomal subunit. Forms part of the ribosomal stalk which helps the ribosome interact with GTP-bound translation factors. Forms a heptameric L10(L12)2(L12)2(L12)2 complex, where L10 forms an elongated spine to which the L12 dimers bind in a sequential fashion.

Its function is as follows. Forms part of the ribosomal stalk, playing a central role in the interaction of the ribosome with GTP-bound translation factors. The sequence is that of Large ribosomal subunit protein uL10 from Pyrobaculum aerophilum (strain ATCC 51768 / DSM 7523 / JCM 9630 / CIP 104966 / NBRC 100827 / IM2).